The following is a 502-amino-acid chain: Glycerol kinase (502 aa).

Thr-14 is an ADP binding site. The ATP site is built by Thr-14, Thr-15, and Ser-16. Residue Thr-14 coordinates sn-glycerol 3-phosphate. Arg-18 contacts ADP. Sn-glycerol 3-phosphate-binding residues include Arg-84, Glu-85, and Tyr-136. Arg-84, Glu-85, and Tyr-136 together coordinate glycerol. A Phosphohistidine; by HPr modification is found at His-232. Position 246 (Asp-246) interacts with sn-glycerol 3-phosphate. Residues Asp-246 and Gln-247 each coordinate glycerol. The ADP site is built by Thr-268 and Gly-311. ATP is bound by residues Thr-268, Gly-311, Gln-315, and Gly-412. Positions 412 and 416 each coordinate ADP.

The protein belongs to the FGGY kinase family. As to quaternary structure, homotetramer and homodimer (in equilibrium). The phosphoenolpyruvate-dependent sugar phosphotransferase system (PTS), including enzyme I, and histidine-containing protein (HPr) are required for the phosphorylation, which leads to the activation of the enzyme.

The enzyme catalyses glycerol + ATP = sn-glycerol 3-phosphate + ADP + H(+). It participates in polyol metabolism; glycerol degradation via glycerol kinase pathway; sn-glycerol 3-phosphate from glycerol: step 1/1. With respect to regulation, activated by phosphorylation and inhibited by fructose 1,6-bisphosphate (FBP). In terms of biological role, key enzyme in the regulation of glycerol uptake and metabolism. Catalyzes the phosphorylation of glycerol to yield sn-glycerol 3-phosphate. This Streptococcus pneumoniae (strain 70585) protein is Glycerol kinase.